Reading from the N-terminus, the 228-residue chain is 2,3-bisphosphoglycerate-dependent phosphoglycerate mutase (228 aa).

Residues 8 to 15 (RHGQSVWN), 21 to 22 (TG), Arg-60, 87 to 90 (ERHY), Lys-98, 114 to 115 (RR), and 183 to 184 (GN) each bind substrate. The Tele-phosphohistidine intermediate role is filled by His-9. Residue Glu-87 is the Proton donor/acceptor of the active site.

It belongs to the phosphoglycerate mutase family. BPG-dependent PGAM subfamily.

The catalysed reaction is (2R)-2-phosphoglycerate = (2R)-3-phosphoglycerate. It participates in carbohydrate degradation; glycolysis; pyruvate from D-glyceraldehyde 3-phosphate: step 3/5. Its function is as follows. Catalyzes the interconversion of 2-phosphoglycerate and 3-phosphoglycerate. This chain is 2,3-bisphosphoglycerate-dependent phosphoglycerate mutase, found in Staphylococcus carnosus (strain TM300).